A 120-amino-acid polypeptide reads, in one-letter code: Large ribosomal subunit protein bL17 (120 aa).

This sequence belongs to the bacterial ribosomal protein bL17 family. Part of the 50S ribosomal subunit. Contacts protein L32.

This chain is Large ribosomal subunit protein bL17, found in Anoxybacillus flavithermus (strain DSM 21510 / WK1).